The following is a 321-amino-acid chain: MIHARIAGTGSYLPGNPVSNDDLVARGIDTSDDWVVSRTGIRTRYLAPPDVGSSDLALVAAQRAIEAAGCAANDIDLIIVATSTPDYIFPSTATLLQSKLGIGNNGAAFDVQAVCSGFVYALSIAEKFIRSGSHKRALVVGAEVFSRILDWTDRATCVLFGDGAGAVVLEASERPGVLTTALHADGSHHPILCVPGNVATGQVVGDPFLRMDGQAVFKFAVKVLGDVAHEVLDAAGVAADSVDWLIPHQANIRIIQATAKRLGLSMEKVVATVDRHGNTSAASIPLALDLAVRDGRIRPGQRVVVEGVGGGFTWGAALIDF.

Active-site residues include Cys-115 and His-248. The tract at residues 249–253 is ACP-binding; the sequence is QANIR. Residue Asn-278 is part of the active site.

The protein belongs to the thiolase-like superfamily. FabH family. In terms of assembly, homodimer.

The protein localises to the cytoplasm. It carries out the reaction malonyl-[ACP] + acetyl-CoA + H(+) = 3-oxobutanoyl-[ACP] + CO2 + CoA. It functions in the pathway lipid metabolism; fatty acid biosynthesis. Its function is as follows. Catalyzes the condensation reaction of fatty acid synthesis by the addition to an acyl acceptor of two carbons from malonyl-ACP. Catalyzes the first condensation reaction which initiates fatty acid synthesis and may therefore play a role in governing the total rate of fatty acid production. Possesses both acetoacetyl-ACP synthase and acetyl transacylase activities. Its substrate specificity determines the biosynthesis of branched-chain and/or straight-chain of fatty acids. The sequence is that of Beta-ketoacyl-[acyl-carrier-protein] synthase III from Azoarcus sp. (strain BH72).